Consider the following 187-residue polypeptide: V-type ATP synthase subunit E (187 aa).

The protein belongs to the V-ATPase E subunit family.

Its function is as follows. Produces ATP from ADP in the presence of a proton gradient across the membrane. In Clostridioides difficile (strain 630) (Peptoclostridium difficile), this protein is V-type ATP synthase subunit E.